The chain runs to 234 residues: Endo-1,4-beta-xylanase 1 (234 aa).

Residues Met1–Ala21 form the signal peptide. 2 N-linked (GlcNAc...) asparagine glycosylation sites follow: Asn25 and Asn75. Residues Ser38–Ala234 enclose the GH11 domain. Residue Glu124 is the Nucleophile of the active site. Asn167 carries an N-linked (GlcNAc...) asparagine glycan. The active-site Proton donor is Glu221.

Belongs to the glycosyl hydrolase 11 (cellulase G) family.

Its subcellular location is the secreted. The catalysed reaction is Endohydrolysis of (1-&gt;4)-beta-D-xylosidic linkages in xylans.. It participates in glycan degradation; xylan degradation. Functionally, endo-1,4-beta-xylanase involved in the hydrolysis of xylan, a major structural heterogeneous polysaccharide found in plant biomass representing the second most abundant polysaccharide in the biosphere, after cellulose. This chain is Endo-1,4-beta-xylanase 1 (Xyn1), found in Leucoagaricus gongylophorus (Leaf-cutting ant fungus).